The following is a 228-amino-acid chain: uncharacterized protein (228 aa).

The first 23 residues, 1 to 23 (MIRHTRLLLASLCLIATGARASA), serve as a signal peptide directing secretion.

This is an uncharacterized protein from Methylorubrum extorquens (strain ATCC 14718 / DSM 1338 / JCM 2805 / NCIMB 9133 / AM1) (Methylobacterium extorquens).